The following is a 305-amino-acid chain: uncharacterized protein (305 aa).

The next 10 membrane-spanning stretches (helical) occupy residues 4-24, 38-58, 67-87, 95-115, 125-145, 152-172, 183-203, 215-235, 250-270, and 272-292; these read LNIY…FNLA, AWRF…TEGI, AVSY…LFFV, VNGA…ARII, VLGI…GSIE, ISGG…YGVL, LSTT…VSLF, IGVW…GYLW, LFFN…GTPI, and VFQV…SGVI. EamA domains are found at residues 15-140 and 164-290; these read IFTG…LVIT and VCWA…TASG.

It belongs to the EamA transporter family.

The protein resides in the cell membrane. This is an uncharacterized protein from Bacillus subtilis (strain 168).